The sequence spans 167 residues: Regulator of sigma D (167 aa).

The protein belongs to the Rsd/AlgQ family. In terms of assembly, interacts with RpoD.

Its subcellular location is the cytoplasm. Binds RpoD and negatively regulates RpoD-mediated transcription activation by preventing the interaction between the primary sigma factor RpoD with the catalytic core of the RNA polymerase and with promoter DNA. May be involved in replacement of the RNA polymerase sigma subunit from RpoD to RpoS during the transition from exponential growth to the stationary phase. The polypeptide is Regulator of sigma D (Yersinia enterocolitica serotype O:8 / biotype 1B (strain NCTC 13174 / 8081)).